We begin with the raw amino-acid sequence, 397 residues long: ATP phosphoribosyltransferase regulatory subunit (397 aa).

It belongs to the class-II aminoacyl-tRNA synthetase family. HisZ subfamily. In terms of assembly, heteromultimer composed of HisG and HisZ subunits.

Its subcellular location is the cytoplasm. Its pathway is amino-acid biosynthesis; L-histidine biosynthesis; L-histidine from 5-phospho-alpha-D-ribose 1-diphosphate: step 1/9. Required for the first step of histidine biosynthesis. May allow the feedback regulation of ATP phosphoribosyltransferase activity by histidine. The protein is ATP phosphoribosyltransferase regulatory subunit of Halalkalibacterium halodurans (strain ATCC BAA-125 / DSM 18197 / FERM 7344 / JCM 9153 / C-125) (Bacillus halodurans).